Here is a 214-residue protein sequence, read N- to C-terminus: Adenylate kinase (214 aa).

10–15 (GAGKGT) contributes to the ATP binding site. The NMP stretch occupies residues 30–59 (STGDMLRAAIKAGTELGKQAKAVIDAGQLV). Residues threonine 31, arginine 36, 57–59 (QLV), 85–88 (GFPR), and glutamine 92 contribute to the AMP site. An LID region spans residues 122–159 (GRRAHLPSGRTYHVVYNPPKVEGKDDVTGEDLVVRDDD). Residues arginine 123 and 132 to 133 (TY) contribute to the ATP site. The AMP site is built by arginine 156 and arginine 167. ATP is bound at residue lysine 200.

The protein belongs to the adenylate kinase family. As to quaternary structure, monomer.

It localises to the cytoplasm. The catalysed reaction is AMP + ATP = 2 ADP. The protein operates within purine metabolism; AMP biosynthesis via salvage pathway; AMP from ADP: step 1/1. Catalyzes the reversible transfer of the terminal phosphate group between ATP and AMP. Plays an important role in cellular energy homeostasis and in adenine nucleotide metabolism. This is Adenylate kinase from Vibrio vulnificus (strain CMCP6).